The following is a 67-amino-acid chain: Large ribosomal subunit protein uL29 (67 aa).

The protein belongs to the universal ribosomal protein uL29 family.

The protein is Large ribosomal subunit protein uL29 of Desulforudis audaxviator (strain MP104C).